The sequence spans 746 residues: Polyribonucleotide nucleotidyltransferase (746 aa).

Residues Asp519 and Asp525 each contribute to the Mg(2+) site. A KH domain is found at 585 to 644 (PRVIAVKIPVDKIGEVIGPKGKMINQIQEDTGADISIEDDGTVYIGATNGPSADAARSAI). The S1 motif domain maps to 656 to 728 (GERYLGTVVK…DRGKLSLSPV (73 aa)).

This sequence belongs to the polyribonucleotide nucleotidyltransferase family. It depends on Mg(2+) as a cofactor.

It localises to the cytoplasm. The enzyme catalyses RNA(n+1) + phosphate = RNA(n) + a ribonucleoside 5'-diphosphate. Its function is as follows. Involved in mRNA degradation. Catalyzes the phosphorolysis of single-stranded polyribonucleotides processively in the 3'- to 5'-direction. This Arthrobacter sp. (strain FB24) protein is Polyribonucleotide nucleotidyltransferase.